Consider the following 284-residue polypeptide: RNase adapter protein RapZ (284 aa).

8 to 15 (GRSGSGKS) is an ATP binding site. 56–59 (DVRN) serves as a coordination point for GTP. The segment at 266–284 (RSRGKNVQSRHRTLEKRKP) is RNA-binding.

Belongs to the RapZ-like family. RapZ subfamily. In terms of assembly, homotrimer.

In terms of biological role, modulates the synthesis of GlmS, by affecting the processing and stability of the regulatory small RNA GlmZ. When glucosamine-6-phosphate (GlcN6P) concentrations are high in the cell, RapZ binds GlmZ and targets it to cleavage by RNase E. Consequently, GlmZ is inactivated and unable to activate GlmS synthesis. Under low GlcN6P concentrations, RapZ is sequestered and inactivated by an other regulatory small RNA, GlmY, preventing GlmZ degradation and leading to synthesis of GlmS. The sequence is that of RNase adapter protein RapZ from Escherichia coli O1:K1 / APEC.